We begin with the raw amino-acid sequence, 231 residues long: Small ribosomal subunit protein uS3 (231 aa).

One can recognise a KH type-2 domain in the interval 39–107; the sequence is IRELLHKELK…DVVINIVEIR (69 aa).

It belongs to the universal ribosomal protein uS3 family. In terms of assembly, part of the 30S ribosomal subunit. Forms a tight complex with proteins S10 and S14.

Its function is as follows. Binds the lower part of the 30S subunit head. Binds mRNA in the 70S ribosome, positioning it for translation. The protein is Small ribosomal subunit protein uS3 of Nitrobacter hamburgensis (strain DSM 10229 / NCIMB 13809 / X14).